Reading from the N-terminus, the 394-residue chain is Elongation factor Tu 1 (394 aa).

The tr-type G domain occupies 10–204 (KPHVNVGTIG…ALDNYIPEPE (195 aa)). The segment at 19–26 (GHVDHGKT) is G1. 19 to 26 (GHVDHGKT) contacts GTP. Thr-26 provides a ligand contact to Mg(2+). Positions 60-64 (GITIS) are G2. The segment at 81-84 (DCPG) is G3. Residues 81 to 85 (DCPGH) and 136 to 139 (NKCD) contribute to the GTP site. The tract at residues 136–139 (NKCD) is G4. The G5 stretch occupies residues 174–176 (SAL).

This sequence belongs to the TRAFAC class translation factor GTPase superfamily. Classic translation factor GTPase family. EF-Tu/EF-1A subfamily. Monomer.

The protein resides in the cytoplasm. It catalyses the reaction GTP + H2O = GDP + phosphate + H(+). Its function is as follows. GTP hydrolase that promotes the GTP-dependent binding of aminoacyl-tRNA to the A-site of ribosomes during protein biosynthesis. This Photobacterium profundum (strain SS9) protein is Elongation factor Tu 1.